Here is a 150-residue protein sequence, read N- to C-terminus: MYCPFCQHDHSKVIDSRVIDAGSAIRRRRECSKCEGRFTTIEKAVLLVVKRNGVTEPFSREKVVTGVRRACQGRDVSDDALKRLAQQVEETVRSNGSSQVRANDIGLAILDPLRELDEVAYLRFASVYKSFDSADDFEKEIRLMRRRGRD.

Residues 3–34 (CPFCQHDHSKVIDSRVIDAGSAIRRRRECSKC) fold into a zinc finger. Positions 46–136 (LLVVKRNGVT…VYKSFDSADD (91 aa)) constitute an ATP-cone domain.

It belongs to the NrdR family. Zn(2+) is required as a cofactor.

In terms of biological role, negatively regulates transcription of bacterial ribonucleotide reductase nrd genes and operons by binding to NrdR-boxes. The protein is Transcriptional repressor NrdR of Corynebacterium glutamicum (strain ATCC 13032 / DSM 20300 / JCM 1318 / BCRC 11384 / CCUG 27702 / LMG 3730 / NBRC 12168 / NCIMB 10025 / NRRL B-2784 / 534).